Consider the following 95-residue polypeptide: Large ribosomal subunit protein uL23 (95 aa).

Belongs to the universal ribosomal protein uL23 family. In terms of assembly, part of the 50S ribosomal subunit. Contacts protein L29, and trigger factor when it is bound to the ribosome.

Functionally, one of the early assembly proteins it binds 23S rRNA. One of the proteins that surrounds the polypeptide exit tunnel on the outside of the ribosome. Forms the main docking site for trigger factor binding to the ribosome. The polypeptide is Large ribosomal subunit protein uL23 (Geobacillus thermodenitrificans (strain NG80-2)).